Here is a 132-residue protein sequence, read N- to C-terminus: Fatty acid-binding protein, adipocyte (132 aa).

The residue at position 2 (Cys-2) is an N-acetylcysteine. The residue at position 13 (Ser-13) is a Phosphoserine. Tyr-20 is modified (phosphotyrosine; by Tyr-kinases). The short motif at 22 to 32 (KEVGVGFATRK) is the Nuclear localization signal element. 127–129 (RVY) provides a ligand contact to a fatty acid.

The protein belongs to the calycin superfamily. Fatty-acid binding protein (FABP) family. Monomer. Homodimer. Interacts with PPARG.

The protein localises to the cytoplasm. Its subcellular location is the nucleus. Functionally, lipid transport protein in adipocytes. Binds both long chain fatty acids and retinoic acid. Delivers long-chain fatty acids and retinoic acid to their cognate receptors in the nucleus. FABPs are important elements related to the hibernating state in mammals. This Ictidomys tridecemlineatus (Thirteen-lined ground squirrel) protein is Fatty acid-binding protein, adipocyte (FABP4).